A 1032-amino-acid chain; its full sequence is FACT complex subunit ctc-2 (1032 aa).

Positions 446–513 (DEEEAQPTPK…QKEGLAKYAE (68 aa)) are disordered. The span at 476 to 508 (LRSERNTTVDEDADKRRREHQKELAQKKQKEGL) shows a compositional bias: basic and acidic residues. Coiled-coil stretches lie at residues 485-506 (DEDA…KQKE), 624-658 (DRYA…EQDK), 785-805 (RRRR…IAEA), and 949-1010 (EVEE…RKAK). The disordered stretch occupies residues 943 to 1032 (NDSDDDEVEE…ERAAPKKRRK (90 aa)). 2 stretches are compositionally biased toward acidic residues: residues 944 to 979 (DSDD…DSEY) and 986 to 1004 (EASD…DWDE).

It belongs to the peptidase M24 family. SPT16 subfamily. Forms a stable heterodimer with ctc-1/pob3. The dimer of ctc-1 and ctc-2 weakly associates with multiple molecules of nhp-1/nhp6 to form the FACT complex.

Its subcellular location is the nucleus. The protein localises to the chromosome. Its function is as follows. Component of the FACT complex, a general chromatin factor that acts to reorganize nucleosomes. The FACT complex is involved in multiple processes that require DNA as a template such as mRNA elongation, DNA replication and DNA repair. During transcription elongation the FACT complex acts as a histone chaperone that both destabilizes and restores nucleosomal structure. It facilitates the passage of RNA polymerase II and transcription by promoting the dissociation of one histone H2A-H2B dimer from the nucleosome, then subsequently promotes the reestablishment of the nucleosome following the passage of RNA polymerase II. The polypeptide is FACT complex subunit ctc-2 (ctc-2) (Neurospora crassa (strain ATCC 24698 / 74-OR23-1A / CBS 708.71 / DSM 1257 / FGSC 987)).